A 487-amino-acid chain; its full sequence is Serine/threonine-protein kinase 4 (487 aa).

Position 1 is an N-acetylmethionine (Met-1). A Phosphothreonine modification is found at Thr-3. In terms of domain architecture, Protein kinase spans 30–281 (FDVLEKLGEG…ATQLLQHPFV (252 aa)). ATP is bound by residues 36–44 (LGEGSYGSV) and Lys-59. Catalysis depends on Asp-149, which acts as the Proton acceptor. Thr-183 carries the post-translational modification Phosphothreonine; by autocatalysis. Ser-265 is modified (phosphoserine). Residues 290-310 (LRDLINEAMDVKLKRQEAQQR) are a coiled coil. The interval 305–338 (QEAQQREVDQDDEENSEEDELDSGTMVRAVGDDM) is disordered. A compositionally biased stretch (acidic residues) spans 313–326 (DQDDEENSEEDELD). At Ser-320 the chain carries Phosphoserine. Thr-340 and Thr-367 each carry phosphothreonine. The residue at position 387 (Thr-387) is a Phosphothreonine; by PKB/AKT1. A phosphoserine mark is found at Ser-410 and Ser-414. Residue Tyr-433 is modified to Phosphotyrosine. Positions 433–480 (YEFLKSWTVEDLQKRLLALDPMMEQEIEEIRQKYQSKRQPILDAIEAK) constitute an SARAH domain.

It belongs to the protein kinase superfamily. STE Ser/Thr protein kinase family. STE20 subfamily. In terms of assembly, homodimer; mediated via the coiled-coil region. Interacts with NORE1, which inhibits autoactivation. Interacts with and stabilizes SAV1. Interacts with RASSF1. Interacts with FOXO3. Interacts with RASSF2 (via SARAH domain). Interacts with AR, PKB/AKT1, TNNI3 and SIRT1. Interacts with DLG5 (via PDZ domain 3). Interacts with MARK3 and SCRIB in the presence of DLG5. Requires Mg(2+) as cofactor. In terms of processing, autophosphorylated on serine and threonine residues. Phosphorylation at Thr-387 by PKB/AKT1, leads to inhibition of its: kinase activity, nuclear translocation and autophosphorylation at Thr-183. It also diminishes its cleavage by caspases and its ability to phosphorylate FOXO3. Post-translationally, proteolytically cleaved by caspase-3 during apoptosis at Asp-326 and Asp-349 resulting in a 37 kDa or a 39 kDa subunit respectively. The 39 kDa subunit is further cleaved into the 37 kDa form. Proteolytic cleavage results in kinase activation and nuclear translocation of the truncated form (MST1/N). It is less likely that cleavage at Asp-349 is a prerequisite for activation as this site is not conserved in the murine ortholog.

It is found in the cytoplasm. It localises to the nucleus. It carries out the reaction L-seryl-[protein] + ATP = O-phospho-L-seryl-[protein] + ADP + H(+). The enzyme catalyses L-threonyl-[protein] + ATP = O-phospho-L-threonyl-[protein] + ADP + H(+). Inhibited by the C-terminal non-catalytic region. Activated by caspase-cleavage. Full activation also requires homodimerization and autophosphorylation of Thr-183. Activated by RASSF1 which acts by preventing its dephosphorylation. Functionally, stress-activated, pro-apoptotic kinase which, following caspase-cleavage, enters the nucleus and induces chromatin condensation followed by internucleosomal DNA fragmentation. Key component of the Hippo signaling pathway which plays a pivotal role in organ size control and tumor suppression by restricting proliferation and promoting apoptosis. The core of this pathway is composed of a kinase cascade wherein STK3/MST2 and STK4/MST1, in complex with its regulatory protein SAV1, phosphorylates and activates LATS1/2 in complex with its regulatory protein MOB1, which in turn phosphorylates and inactivates YAP1 oncoprotein and WWTR1/TAZ. Phosphorylation of YAP1 by LATS2 inhibits its translocation into the nucleus to regulate cellular genes important for cell proliferation, cell death, and cell migration. STK3/MST2 and STK4/MST1 are required to repress proliferation of mature hepatocytes, to prevent activation of facultative adult liver stem cells (oval cells), and to inhibit tumor formation. Phosphorylates 'Ser-14' of histone H2B (H2BS14ph) during apoptosis. Phosphorylates FOXO3 upon oxidative stress, which results in its nuclear translocation and cell death initiation. Phosphorylates MOBKL1A, MOBKL1B and RASSF2. Phosphorylates TNNI3 (cardiac Tn-I) and alters its binding affinity to TNNC1 (cardiac Tn-C) and TNNT2 (cardiac Tn-T). Phosphorylates FOXO1 on 'Ser-212' and regulates its activation and stimulates transcription of PMAIP1 in a FOXO1-dependent manner. Phosphorylates SIRT1 and inhibits SIRT1-mediated p53/TP53 deacetylation, thereby promoting p53/TP53 dependent transcription and apoptosis upon DNA damage. Acts as an inhibitor of PKB/AKT1. Phosphorylates AR on 'Ser-650' and suppresses its activity by intersecting with PKB/AKT1 signaling and antagonizing formation of AR-chromatin complexes. The polypeptide is Serine/threonine-protein kinase 4 (STK4) (Lemur catta (Ring-tailed lemur)).